The sequence spans 624 residues: Phragmoplastin DRP1E (624 aa).

N-acetylthreonine is present on threonine 2. The region spanning 37-306 (WEALPTVAVV…LESVIRTRIP (270 aa)) is the Dynamin-type G domain. Residues 47-54 (GGQSSGKS) form a G1 motif region. GTP is bound at residue 50 to 55 (SSGKSS). The interval 73 to 75 (VTR) is G2 motif. The interval 148 to 151 (DLPG) is G3 motif. The tract at residues 217–220 (TKLD) is G4 motif. Residues 218–223 (KLDLMD) and 248–251 (NRSQ) contribute to the GTP site. A G5 motif region spans residues 247–250 (VNRS). The 93-residue stretch at 532 to 624 (FRRIASNVSA…DEIDAVAWVR (93 aa)) folds into the GED domain.

This sequence belongs to the TRAFAC class dynamin-like GTPase superfamily. Dynamin/Fzo/YdjA family. Forms homodimer and may homooligomerize and heterooligomerize to form the phragmoplastin complex. Binds to PHIP1. As to expression, ubiquitous.

The protein localises to the cytoplasm. It localises to the cytoskeleton. Its subcellular location is the phragmoplast. The catalysed reaction is GTP + H2O = GDP + phosphate + H(+). Microtubule-associated force-producing protein that is targeted to the tubulo-vesicular network of the forming cell plate during cytokinesis. Also plays a major role in plasma membrane maintenance and cell wall integrity with an implication in vesicular trafficking, polar cell expansion, and other aspects of plant growth and development. Has a GTPase activity. This is Phragmoplastin DRP1E from Arabidopsis thaliana (Mouse-ear cress).